The following is a 479-amino-acid chain: Outer membrane protein OprJ (479 aa).

Positions 1 to 19 (MRKPAFGVSALLIALTLGA) are cleaved as a signal peptide. Cys-20 carries N-palmitoyl cysteine lipidation. A lipid anchor (S-diacylglycerol cysteine) is attached at Cys-20. Positions 102–121 (LNAAATGNRQRQPADLSAGN) are disordered.

This sequence belongs to the outer membrane factor (OMF) (TC 1.B.17) family.

It localises to the cell outer membrane. In terms of biological role, channel-forming component of a multidrug resistance efflux pump. This Pseudomonas aeruginosa (strain ATCC 15692 / DSM 22644 / CIP 104116 / JCM 14847 / LMG 12228 / 1C / PRS 101 / PAO1) protein is Outer membrane protein OprJ (oprJ).